The chain runs to 325 residues: Succinylglutamate desuccinylase (325 aa).

3 residues coordinate Zn(2+): His-51, Glu-54, and His-148. Residue Glu-211 is part of the active site.

It belongs to the AspA/AstE family. Succinylglutamate desuccinylase subfamily. The cofactor is Zn(2+).

It catalyses the reaction N-succinyl-L-glutamate + H2O = L-glutamate + succinate. It participates in amino-acid degradation; L-arginine degradation via AST pathway; L-glutamate and succinate from L-arginine: step 5/5. Functionally, transforms N(2)-succinylglutamate into succinate and glutamate. This Photorhabdus laumondii subsp. laumondii (strain DSM 15139 / CIP 105565 / TT01) (Photorhabdus luminescens subsp. laumondii) protein is Succinylglutamate desuccinylase.